A 137-amino-acid polypeptide reads, in one-letter code: Peptide methionine sulfoxide reductase MsrB (137 aa).

The 123-residue stretch at 7–129 (AEELKKKLSE…NSASLAFSDE (123 aa)) folds into the MsrB domain. Zn(2+) is bound by residues cysteine 46, cysteine 49, cysteine 95, and cysteine 98. Cysteine 118 serves as the catalytic Nucleophile.

Belongs to the MsrB Met sulfoxide reductase family. The cofactor is Zn(2+).

The catalysed reaction is L-methionyl-[protein] + [thioredoxin]-disulfide + H2O = L-methionyl-(R)-S-oxide-[protein] + [thioredoxin]-dithiol. This is Peptide methionine sulfoxide reductase MsrB from Salmonella dublin (strain CT_02021853).